Reading from the N-terminus, the 155-residue chain is Ferredoxin-6, chloroplastic (155 aa).

A chloroplast-targeting transit peptide spans 1-58 (MSTATAPRLPAPRSGASYHYQTTAAPAANTLSFAGHARQAARASGPRLSSRFVASAAA). One can recognise a 2Fe-2S ferredoxin-type domain in the interval 61–152 (HKVKLVGPDG…DCVIHTHKEE (92 aa)). The [2Fe-2S] cluster site is built by C98, C103, C106, and C136.

Belongs to the 2Fe2S plant-type ferredoxin family. It depends on [2Fe-2S] cluster as a cofactor.

The protein resides in the plastid. It localises to the chloroplast. Ferredoxins are iron-sulfur proteins that transfer electrons in a wide variety of metabolic reactions. In Zea mays (Maize), this protein is Ferredoxin-6, chloroplastic (FDX6).